The following is an 88-amino-acid chain: Small ribosomal subunit protein uS15 (88 aa).

Belongs to the universal ribosomal protein uS15 family. In terms of assembly, part of the 30S ribosomal subunit. Forms a bridge to the 50S subunit in the 70S ribosome, contacting the 23S rRNA.

Its function is as follows. One of the primary rRNA binding proteins, it binds directly to 16S rRNA where it helps nucleate assembly of the platform of the 30S subunit by binding and bridging several RNA helices of the 16S rRNA. Functionally, forms an intersubunit bridge (bridge B4) with the 23S rRNA of the 50S subunit in the ribosome. The polypeptide is Small ribosomal subunit protein uS15 (Desulfitobacterium hafniense (strain Y51)).